The sequence spans 144 residues: Eukaryotic translation initiation factor 1A, Y-chromosomal (144 aa).

Positions 1–15 are enriched in basic residues; that stretch reads MPKNKGKGGKNRRRG. The segment at 1–26 is disordered; that stretch reads MPKNKGKGGKNRRRGKNENESEKREL. Over residues 16-26 the composition is skewed to basic and acidic residues; sequence KNENESEKREL. In terms of domain architecture, S1-like spans 22–96; sequence EKRELVFKED…NKADVILKYN (75 aa). Residue K88 forms a Glycyl lysine isopeptide (Lys-Gly) (interchain with G-Cter in ubiquitin) linkage. A disordered region spans residues 114 to 144; the sequence is KINETDTFGPGDDDEVQFDDIGDDDEDIDDI. The span at 124–144 shows a compositional bias: acidic residues; the sequence is GDDDEVQFDDIGDDDEDIDDI.

The protein belongs to the eIF-1A family. In terms of assembly, component of the 43S pre-initiation complex (43S PIC), which is composed of the 40S ribosomal subunit, EIF1, eIF1A (EIF1AX), eIF3 complex, EIF5 and eIF2-GTP-initiator tRNA complex (eIF2 ternary complex). Interacts with EIF5; this interaction contributes to the maintenance of EIF1 within the open 43S PIC. Interacts through its C-terminal domain (CTD) with the CTD of EIF5B; from the location of the start codon by the 43S complex until the formation of the 80S complex. In terms of tissue distribution, ubiquitous.

Its subcellular location is the cytoplasm. Component of the 43S pre-initiation complex (43S PIC), which binds to the mRNA cap-proximal region, scans mRNA 5'-untranslated region, and locates the initiation codon. This protein enhances formation of the cap-proximal complex. Together with EIF1, facilitates scanning, start codon recognition, promotion of the assembly of 48S complex at the initiation codon (43S PIC becomes 48S PIC after the start codon is reached), and dissociation of aberrant complexes. After start codon location, together with EIF5B orients the initiator methionine-tRNA in a conformation that allows 60S ribosomal subunit joining to form the 80S initiation complex. Is released after 80S initiation complex formation, just after GTP hydrolysis by EIF5B, and before release of EIF5B. Its globular part is located in the A site of the 40S ribosomal subunit. Its interaction with EIF5 during scanning contribute to the maintenance of EIF1 within the open 43S PIC. In contrast to yeast orthologs, does not bind EIF1. This Pan troglodytes (Chimpanzee) protein is Eukaryotic translation initiation factor 1A, Y-chromosomal (EIF1AY).